The primary structure comprises 173 residues: Glutamyl-tRNA(Gln) amidotransferase subunit F, mitochondrial (173 aa).

Residues M1–T15 constitute a mitochondrion transit peptide.

This sequence belongs to the GatF family. In terms of assembly, subunit of the heterotrimeric GatFAB amidotransferase (AdT) complex, composed of A, B and F subunits.

Its subcellular location is the mitochondrion inner membrane. The enzyme catalyses L-glutamyl-tRNA(Gln) + L-glutamine + ATP + H2O = L-glutaminyl-tRNA(Gln) + L-glutamate + ADP + phosphate + H(+). Its function is as follows. Allows the formation of correctly charged Gln-tRNA(Gln) through the transamidation of misacylated Glu-tRNA(Gln) in the mitochondria. The reaction takes place in the presence of glutamine and ATP through an activated gamma-phospho-Glu-tRNA(Gln). Required for proper protein synthesis within the mitochondrion. The sequence is that of Glutamyl-tRNA(Gln) amidotransferase subunit F, mitochondrial from Candida glabrata (strain ATCC 2001 / BCRC 20586 / JCM 3761 / NBRC 0622 / NRRL Y-65 / CBS 138) (Yeast).